A 443-amino-acid chain; its full sequence is tRNA modification GTPase MnmE (443 aa).

Arg23, Glu82, and Lys121 together coordinate (6S)-5-formyl-5,6,7,8-tetrahydrofolate. The TrmE-type G domain maps to 215 to 364 (GTSIVLAGHP…LKQFIQKWMQ (150 aa)). K(+) is bound at residue Asn225. Residues 225 to 230 (NVGKSS), 244 to 250 (TDIPGTT), and 269 to 272 (DSAG) contribute to the GTP site. Ser229 lines the Mg(2+) pocket. Residues Thr244, Ile246, and Thr249 each coordinate K(+). Thr250 provides a ligand contact to Mg(2+). Position 443 (Lys443) interacts with (6S)-5-formyl-5,6,7,8-tetrahydrofolate.

This sequence belongs to the TRAFAC class TrmE-Era-EngA-EngB-Septin-like GTPase superfamily. TrmE GTPase family. As to quaternary structure, homodimer. Heterotetramer of two MnmE and two MnmG subunits. K(+) is required as a cofactor.

It localises to the cytoplasm. Functionally, exhibits a very high intrinsic GTPase hydrolysis rate. Involved in the addition of a carboxymethylaminomethyl (cmnm) group at the wobble position (U34) of certain tRNAs, forming tRNA-cmnm(5)s(2)U34. This Chlamydia caviae (strain ATCC VR-813 / DSM 19441 / 03DC25 / GPIC) (Chlamydophila caviae) protein is tRNA modification GTPase MnmE.